The sequence spans 142 residues: Large ribosomal subunit protein uL13 (142 aa).

It belongs to the universal ribosomal protein uL13 family. As to quaternary structure, part of the 50S ribosomal subunit.

In terms of biological role, this protein is one of the early assembly proteins of the 50S ribosomal subunit, although it is not seen to bind rRNA by itself. It is important during the early stages of 50S assembly. The sequence is that of Large ribosomal subunit protein uL13 from Pseudomonas putida (strain ATCC 700007 / DSM 6899 / JCM 31910 / BCRC 17059 / LMG 24140 / F1).